We begin with the raw amino-acid sequence, 338 residues long: Heme-dependent oxidative N-demethylase alpha subunit (338 aa).

Heme b is bound by residues Tyr38 and His194. Residue Arg224 is the Proton donor of the active site. A heme b-binding site is contributed by Asn226. Glu266 lines the dimethylamine pocket. Heme b contacts are provided by Tyr317 and Lys318.

The heme-dependent oxidative N-demethylase (HODM) is a heterotetramer composed of a catalytic alpha subunit, a FMN/2Fe-2S-dependent oxidoreductase beta subunit, a gamma subunit with putative aminotransferase activity, and a delta subunit of unknown function.

It catalyses the reaction dimethylamine + NADPH + O2 + H(+) = methylamine + formaldehyde + NADP(+) + H2O. In terms of biological role, component of the heme-dependent oxidative N-demethylase (HODM) enzyme, that catalyzes the NADPH-dependent oxidation of dimethylamine (DMA) to methylamine (MA) and formaldehyde. Functions in bacterial methylated amine catabolism, linking alkylamine oxidation to the tetrahydrofolate C1 pool. The alpha subunit of HODM binds heme, oxygen and DMA, and serves as the site of the oxidative N-demethylase activity. The polypeptide is Heme-dependent oxidative N-demethylase alpha subunit (Ectopseudomonas mendocina (strain ymp) (Pseudomonas mendocina)).